We begin with the raw amino-acid sequence, 423 residues long: UDP-N-acetylglucosamine 1-carboxyvinyltransferase 1 (423 aa).

24 to 25 (KN) lines the phosphoenolpyruvate pocket. Arg94 serves as a coordination point for UDP-N-acetyl-alpha-D-glucosamine. Cys118 functions as the Proton donor in the catalytic mechanism. A 2-(S-cysteinyl)pyruvic acid O-phosphothioketal modification is found at Cys118. UDP-N-acetyl-alpha-D-glucosamine-binding positions include 123–127 (RPIDQ), Asp309, and Ile331.

This sequence belongs to the EPSP synthase family. MurA subfamily.

The protein resides in the cytoplasm. The enzyme catalyses phosphoenolpyruvate + UDP-N-acetyl-alpha-D-glucosamine = UDP-N-acetyl-3-O-(1-carboxyvinyl)-alpha-D-glucosamine + phosphate. It functions in the pathway cell wall biogenesis; peptidoglycan biosynthesis. In terms of biological role, cell wall formation. Adds enolpyruvyl to UDP-N-acetylglucosamine. This chain is UDP-N-acetylglucosamine 1-carboxyvinyltransferase 1, found in Staphylococcus haemolyticus (strain JCSC1435).